Consider the following 513-residue polypeptide: Histidine ammonia-lyase (513 aa).

The 5-imidazolinone (Ala-Gly) cross-link spans 142–144 (ASG). A 2,3-didehydroalanine (Ser) modification is found at Ser-143.

It belongs to the PAL/histidase family. In terms of processing, contains an active site 4-methylidene-imidazol-5-one (MIO), which is formed autocatalytically by cyclization and dehydration of residues Ala-Ser-Gly.

The protein resides in the cytoplasm. It carries out the reaction L-histidine = trans-urocanate + NH4(+). Its pathway is amino-acid degradation; L-histidine degradation into L-glutamate; N-formimidoyl-L-glutamate from L-histidine: step 1/3. This is Histidine ammonia-lyase from Roseobacter denitrificans (strain ATCC 33942 / OCh 114) (Erythrobacter sp. (strain OCh 114)).